The following is a 295-amino-acid chain: Secreted frizzled-related protein 2 (295 aa).

Residues 1 to 24 (MLQGPGSLLLLFLASHCCLGSARG) form the signal peptide. The region spanning 35 to 155 (YKRSNCKPIP…PQDNDLCIPL (121 aa)) is the FZ domain. 8 disulfides stabilise this stretch: Cys-40–Cys-103, Cys-50–Cys-96, Cys-87–Cys-125, Cys-114–Cys-152, Cys-118–Cys-142, Cys-172–Cys-245, Cys-175–Cys-247, and Cys-190–Cys-295. An NTR domain is found at 172–295 (CEACKNKNDD…ISRSIRKLQC (124 aa)).

This sequence belongs to the secreted frizzled-related protein (sFRP) family. As to expression, expressed in adipose tissue, heart, brain, skeletal muscle, pancreas, thymus, prostate, testis, ovary, small intestine and colon. Highest levels in adipose tissue, small intestine and colon.

Its subcellular location is the secreted. Functionally, soluble frizzled-related proteins (sFRPS) function as modulators of Wnt signaling through direct interaction with Wnts. They have a role in regulating cell growth and differentiation in specific cell types. SFRP2 may be important for eye retinal development and for myogenesis. The chain is Secreted frizzled-related protein 2 (SFRP2) from Homo sapiens (Human).